The sequence spans 393 residues: Biotin synthase, mitochondrial (393 aa).

Residues 1–20 constitute a mitochondrion transit peptide; that stretch reads MSVSFTRSFPRAFIRSYGTV. The Radical SAM core domain maps to 81-310; that stretch reads SAIQMCTLMN…ATIVRLAAGR (230 aa). Positions 96, 100, and 103 each coordinate [4Fe-4S] cluster. [2Fe-2S] cluster is bound by residues Cys140, Cys173, Cys233, and Arg305. Residues 366–393 are disordered; that stretch reads NAATPQQHVDSVAHESEKNPAAPAAEAL.

It belongs to the radical SAM superfamily. Biotin synthase family. Requires [4Fe-4S] cluster as cofactor. The cofactor is [2Fe-2S] cluster.

Its subcellular location is the mitochondrion. It carries out the reaction (4R,5S)-dethiobiotin + (sulfur carrier)-SH + 2 reduced [2Fe-2S]-[ferredoxin] + 2 S-adenosyl-L-methionine = (sulfur carrier)-H + biotin + 2 5'-deoxyadenosine + 2 L-methionine + 2 oxidized [2Fe-2S]-[ferredoxin]. The protein operates within cofactor biosynthesis; biotin biosynthesis; biotin from 7,8-diaminononanoate: step 2/2. Its function is as follows. Biotin synthase; part of the cluster involved in the biosynthesis of biotin (also known as vitamin B8 or vitamin H), a water-soluble vitamin that functions as a prosthetic group of many carboxylases, such as acetyl-CoA carboxylase and pyruvate carboxylase. Catalyzes the conversion of dethiobiotin (DTB) to biotin by the insertion of a sulfur atom into dethiobiotin via a radical-based mechanism. This Emericella nidulans (strain FGSC A4 / ATCC 38163 / CBS 112.46 / NRRL 194 / M139) (Aspergillus nidulans) protein is Biotin synthase, mitochondrial.